Here is a 511-residue protein sequence, read N- to C-terminus: Histidine ammonia-lyase (511 aa).

Positions 142–144 form a cross-link, 5-imidazolinone (Ala-Gly); that stretch reads ASG. Ser-143 carries the 2,3-didehydroalanine (Ser) modification.

Belongs to the PAL/histidase family. Contains an active site 4-methylidene-imidazol-5-one (MIO), which is formed autocatalytically by cyclization and dehydration of residues Ala-Ser-Gly.

It localises to the cytoplasm. The enzyme catalyses L-histidine = trans-urocanate + NH4(+). The protein operates within amino-acid degradation; L-histidine degradation into L-glutamate; N-formimidoyl-L-glutamate from L-histidine: step 1/3. This chain is Histidine ammonia-lyase, found in Brucella anthropi (strain ATCC 49188 / DSM 6882 / CCUG 24695 / JCM 21032 / LMG 3331 / NBRC 15819 / NCTC 12168 / Alc 37) (Ochrobactrum anthropi).